Consider the following 213-residue polypeptide: Uridine kinase (213 aa).

Residue G15–S22 participates in ATP binding.

The protein belongs to the uridine kinase family.

It localises to the cytoplasm. The enzyme catalyses uridine + ATP = UMP + ADP + H(+). The catalysed reaction is cytidine + ATP = CMP + ADP + H(+). It functions in the pathway pyrimidine metabolism; CTP biosynthesis via salvage pathway; CTP from cytidine: step 1/3. The protein operates within pyrimidine metabolism; UMP biosynthesis via salvage pathway; UMP from uridine: step 1/1. In Escherichia coli O157:H7, this protein is Uridine kinase.